A 554-amino-acid polypeptide reads, in one-letter code: MYHPHHLPAHGQVQSHQHREDAAATSSRDVNGGLSVTESAIASFRSLREKYPPKKLTRDAMRRYLKDPNDQTLIVLHAKVAQKSYGNEKRFFCPPPCMYLLGNGWKRKQQILEEEEGSSEAGQLHAFIGIGSSEQEMQQLHLDGKNFCTAKTLYISDTDKRKHFMLNVKMFFGGGGADVGQFSSKRIKVISKPSKKKQSLKNADLCIASGTKVALFNRLRSQTVSTRYLHVEKGNFHASSIQWGCFAIHLLDDDESESEEFSVVDGYIHYGQTVKLVCSNTGMALPRLIIRKVDKQTAILDADDPVSQLHKCAFYLKDTERMYLCLSQERIIQFQATPCPKETNKEMINDGASWTIISTDKAEYTFCDGMGPTADPVTPVPNVHSLQLNGGGDVAMLEVNGECFTSNLKVWFGEIEADTMFRCAEGLLCVVPDISAFREGWKWVKESVQVPINLVRNDGVIYPTNLTFTFTPEPGPRQHCPAALNILHGSKRPSASMPPTPVSGSEDDSGRGNESDRGDPIMPIKRPALDVHGRPVAPEAAATMNGANMLRTAS.

A disordered region spans residues 1 to 31; it reads MYHPHHLPAHGQVQSHQHREDAAATSSRDVN. 3 DNA-binding regions span residues 83 to 90, 218 to 227, and 291 to 323; these read KSYGNEKR, RLRSQTVSTR, and RKVDKQTAILDADDPVSQLHKCAFYLKDTERMY. Positions 381-471 constitute an IPT/TIG domain; that stretch reads PNVHSLQLNG…YPTNLTFTFT (91 aa). The segment at 489–554 is disordered; sequence GSKRPSASMP…NGANMLRTAS (66 aa). Residues 508 to 519 show a composition bias toward basic and acidic residues; sequence DSGRGNESDRGD.

It belongs to the Su(H) family. Interacts with activated Notch proteins.

The protein resides in the nucleus. Transcriptional regulator that plays a central role in Notch signaling, a signaling pathway involved in cell-cell communication that regulates a broad spectrum of cell-fate determinations. Acts as a transcriptional repressor when it is not associated with Notch proteins. When associated with some Notch protein, it acts as a transcriptional activator that activates transcription of Notch target genes. Required for the transcriptional expression of Brachyury, suggesting that it participates in notochord differentiation. This Ciona intestinalis (Transparent sea squirt) protein is Suppressor of hairless homolog (Su(H)).